Here is a 246-residue protein sequence, read N- to C-terminus: Probable phosphatase PBPRB2022 (246 aa).

Zn(2+) contacts are provided by His8, His10, His16, His41, Glu74, His102, His132, Asp193, and His195.

The protein belongs to the PHP family. Zn(2+) is required as a cofactor.

This is Probable phosphatase PBPRB2022 from Photobacterium profundum (strain SS9).